The sequence spans 295 residues: Proline-rich protein 32 (295 aa).

2 disordered regions span residues 10 to 48 (GHAPSPTAVAAAENGNREPRPSLPFQCPKDDAGSWGHPG) and 101 to 120 (ATGEVNSSEGPAGWRQSGQD).

This is Proline-rich protein 32 (PRR32) from Bos taurus (Bovine).